A 271-amino-acid chain; its full sequence is Cobalt import ATP-binding protein CbiO (271 aa).

An ABC transporter domain is found at Leu2 to Thr236. Gly34–Ser41 contributes to the ATP binding site.

It belongs to the ABC transporter superfamily. Cobalt importer (TC 3.A.1.18.1) family. In terms of assembly, forms an energy-coupling factor (ECF) transporter complex composed of an ATP-binding protein (A component, CbiO), a transmembrane protein (T component, CbiQ) and 2 possible substrate-capture proteins (S components, CbiM and CbiN) of unknown stoichimetry. Expression of just CbiMN in E.coli confers some cobalt uptake.

It localises to the cell inner membrane. It functions in the pathway cofactor biosynthesis; adenosylcobalamin biosynthesis. Its function is as follows. Part of the energy-coupling factor (ECF) transporter complex CbiMNOQ involved in cobalt import. The complex confers cobalt uptake upon expression in E.coli; can also transport nickel with a very low affinity. Presumably responsible for energy coupling to the transport system. The chain is Cobalt import ATP-binding protein CbiO from Salmonella typhimurium (strain LT2 / SGSC1412 / ATCC 700720).